A 339-amino-acid chain; its full sequence is Phenylalanine--tRNA ligase alpha subunit (339 aa).

Glu-254 serves as a coordination point for Mg(2+).

This sequence belongs to the class-II aminoacyl-tRNA synthetase family. Phe-tRNA synthetase alpha subunit type 1 subfamily. As to quaternary structure, tetramer of two alpha and two beta subunits. Mg(2+) is required as a cofactor.

It is found in the cytoplasm. The catalysed reaction is tRNA(Phe) + L-phenylalanine + ATP = L-phenylalanyl-tRNA(Phe) + AMP + diphosphate + H(+). The polypeptide is Phenylalanine--tRNA ligase alpha subunit (Desulforudis audaxviator (strain MP104C)).